A 160-amino-acid chain; its full sequence is Transcriptional repressor NrdR (160 aa).

Polar residues predominate over residues 1-11 (MRCPNCNSLDT). A disordered region spans residues 1–20 (MRCPNCNSLDTQVKDSRPTE). Residues 3–34 (CPNCNSLDTQVKDSRPTEDSSVIRRRRVCIAC) fold into a zinc finger. One can recognise an ATP-cone domain in the interval 49–139 (LTVIKRNGRR…VYRNFREAKD (91 aa)).

Belongs to the NrdR family. It depends on Zn(2+) as a cofactor.

Its function is as follows. Negatively regulates transcription of bacterial ribonucleotide reductase nrd genes and operons by binding to NrdR-boxes. In Rhodopseudomonas palustris (strain BisB5), this protein is Transcriptional repressor NrdR.